Here is a 128-residue protein sequence, read N- to C-terminus: Large ribosomal subunit protein bL17 (128 aa).

This sequence belongs to the bacterial ribosomal protein bL17 family. In terms of assembly, part of the 50S ribosomal subunit. Contacts protein L32.

The sequence is that of Large ribosomal subunit protein bL17 from Hydrogenovibrio crunogenus (strain DSM 25203 / XCL-2) (Thiomicrospira crunogena).